Consider the following 28-residue polypeptide: KEGYPDGQNGKKIPCAINDNISKTXEQA.

The disordered stretch occupies residues 1–28; that stretch reads KEGYPDGQNGKKIPCAINDNISKTXEQA. A compositionally biased stretch (polar residues) spans 19-28; that stretch reads DNISKTXEQA.

As to expression, expressed by the venom gland.

The protein resides in the secreted. Causes symptoms of mild intoxication and transient paralysis in insects (A.domestica). The protein is Venom protein of Rhopalurus junceus (Caribbean blue scorpion).